Consider the following 391-residue polypeptide: NAD(P)H-quinone oxidoreductase subunit H, chloroplastic (391 aa).

Belongs to the complex I 49 kDa subunit family. As to quaternary structure, NDH is composed of at least 16 different subunits, 5 of which are encoded in the nucleus.

It is found in the plastid. Its subcellular location is the chloroplast thylakoid membrane. The enzyme catalyses a plastoquinone + NADH + (n+1) H(+)(in) = a plastoquinol + NAD(+) + n H(+)(out). It carries out the reaction a plastoquinone + NADPH + (n+1) H(+)(in) = a plastoquinol + NADP(+) + n H(+)(out). Functionally, NDH shuttles electrons from NAD(P)H:plastoquinone, via FMN and iron-sulfur (Fe-S) centers, to quinones in the photosynthetic chain and possibly in a chloroplast respiratory chain. The immediate electron acceptor for the enzyme in this species is believed to be plastoquinone. Couples the redox reaction to proton translocation, and thus conserves the redox energy in a proton gradient. In Chaetosphaeridium globosum (Charophycean green alga), this protein is NAD(P)H-quinone oxidoreductase subunit H, chloroplastic.